A 211-amino-acid polypeptide reads, in one-letter code: Thymidylate kinase (211 aa).

ATP is bound at residue 11 to 18 (GPDGAGKT).

Belongs to the thymidylate kinase family.

It carries out the reaction dTMP + ATP = dTDP + ADP. Functionally, phosphorylation of dTMP to form dTDP in both de novo and salvage pathways of dTTP synthesis. This Streptococcus agalactiae serotype Ia (strain ATCC 27591 / A909 / CDC SS700) protein is Thymidylate kinase.